The primary structure comprises 415 residues: uncharacterized protein (415 aa).

Disordered stretches follow at residues 39 to 77 (FLPPSSNTTLQKESQEGSPPPTQSQEPLKPMENVSRPIH), 220 to 247 (AEDKETTSKGSNAKEESKNGLHPKHPLT), and 346 to 415 (VTLN…NGSK). Basic and acidic residues-rich tracts occupy residues 220–238 (AEDKETTSKGSNAKEESKN), 365–380 (DVNKDPKLNLCPDKHM), and 400–415 (SKTEKIYPEPRRNGSK).

This is an uncharacterized protein from Rattus norvegicus (Rat).